We begin with the raw amino-acid sequence, 137 residues long: Small ribosomal subunit protein uS12 (137 aa).

The segment at 1–24 (MPTINQLVRKGRRSQSSKSKAPAL) is disordered. 3-methylthioaspartic acid is present on aspartate 102.

It belongs to the universal ribosomal protein uS12 family. Part of the 30S ribosomal subunit. Contacts proteins S8 and S17. May interact with IF1 in the 30S initiation complex.

In terms of biological role, with S4 and S5 plays an important role in translational accuracy. Functionally, interacts with and stabilizes bases of the 16S rRNA that are involved in tRNA selection in the A site and with the mRNA backbone. Located at the interface of the 30S and 50S subunits, it traverses the body of the 30S subunit contacting proteins on the other side and probably holding the rRNA structure together. The combined cluster of proteins S8, S12 and S17 appears to hold together the shoulder and platform of the 30S subunit. This Pediococcus pentosaceus (strain ATCC 25745 / CCUG 21536 / LMG 10740 / 183-1w) protein is Small ribosomal subunit protein uS12.